The sequence spans 151 residues: SsrA-binding protein (151 aa).

The protein belongs to the SmpB family.

It localises to the cytoplasm. In terms of biological role, required for rescue of stalled ribosomes mediated by trans-translation. Binds to transfer-messenger RNA (tmRNA), required for stable association of tmRNA with ribosomes. tmRNA and SmpB together mimic tRNA shape, replacing the anticodon stem-loop with SmpB. tmRNA is encoded by the ssrA gene; the 2 termini fold to resemble tRNA(Ala) and it encodes a 'tag peptide', a short internal open reading frame. During trans-translation Ala-aminoacylated tmRNA acts like a tRNA, entering the A-site of stalled ribosomes, displacing the stalled mRNA. The ribosome then switches to translate the ORF on the tmRNA; the nascent peptide is terminated with the 'tag peptide' encoded by the tmRNA and targeted for degradation. The ribosome is freed to recommence translation, which seems to be the essential function of trans-translation. The chain is SsrA-binding protein from Lactobacillus acidophilus (strain ATCC 700396 / NCK56 / N2 / NCFM).